We begin with the raw amino-acid sequence, 279 residues long: Lacto-N-neotetraose biosynthesis glycosyltransferase LgtB (279 aa).

It belongs to the glycosyltransferase 25 family.

It functions in the pathway glycan metabolism; lacto-N-neotetraose biosynthesis. The protein operates within bacterial outer membrane biogenesis; lipooligosaccharide biosynthesis. Functionally, adds the second galactose to the lacto-N-tetraose chain in lipooligosaccharide (LOS). This Neisseria gonorrhoeae protein is Lacto-N-neotetraose biosynthesis glycosyltransferase LgtB (lgtB).